A 773-amino-acid polypeptide reads, in one-letter code: Tyrosine kinase receptor Cad96Ca (773 aa).

The N-terminal stretch at Met1–Ala48 is a signal peptide. The Extracellular segment spans residues His49–Thr315. The 115-residue stretch at Tyr58–Thr172 folds into the Cadherin domain. Asn126, Asn164, and Asn180 each carry an N-linked (GlcNAc...) asparagine glycan. The segment at Ser196–Ser302 is disordered. Residues Trp209 to Ile235 show a composition bias toward pro residues. Positions Ser243–Val253 are enriched in acidic residues. Polar residues-rich tracts occupy residues Thr254–Val283 and Glu290–Ser302. Asn278, Asn279, Asn300, and Asn301 each carry an N-linked (GlcNAc...) asparagine glycan. Residues Ile316–Leu336 traverse the membrane as a helical segment. At Cys337 to Leu773 the chain is on the cytoplasmic side. Disordered stretches follow at residues Lys352 to Asp373 and Thr411 to Ser447. The segment covering Ser361–Asp373 has biased composition (polar residues). Residues Thr411–Ser433 show a composition bias toward low complexity. The Protein kinase domain maps to Leu470–Met749. Residues Leu476–Val484 and Lys504 contribute to the ATP site. Asp610 acts as the Proton acceptor in catalysis.

This sequence belongs to the protein kinase superfamily. Tyr protein kinase family. Fibroblast growth factor receptor subfamily.

It is found in the membrane. The enzyme catalyses L-tyrosyl-[protein] + ATP = O-phospho-L-tyrosyl-[protein] + ADP + H(+). The polypeptide is Tyrosine kinase receptor Cad96Ca (Cad96Ca) (Drosophila melanogaster (Fruit fly)).